The sequence spans 253 residues: Phosphoadenosine 5'-phosphosulfate reductase (253 aa).

The active-site Nucleophile; cysteine thiosulfonate intermediate is Cys239.

The protein belongs to the PAPS reductase family. CysH subfamily.

It localises to the cytoplasm. The catalysed reaction is [thioredoxin]-disulfide + sulfite + adenosine 3',5'-bisphosphate + 2 H(+) = [thioredoxin]-dithiol + 3'-phosphoadenylyl sulfate. It participates in sulfur metabolism; hydrogen sulfide biosynthesis; sulfite from sulfate: step 3/3. Functionally, catalyzes the formation of sulfite from phosphoadenosine 5'-phosphosulfate (PAPS) using thioredoxin as an electron donor. The polypeptide is Phosphoadenosine 5'-phosphosulfate reductase (Aliivibrio salmonicida (strain LFI1238) (Vibrio salmonicida (strain LFI1238))).